Reading from the N-terminus, the 1175-residue chain is Phospholipid-transporting ATPase IF (1175 aa).

4 helical membrane-spanning segments follow: residues 69-89 (FYFL…SPIT), 91-111 (GLPL…EDWL), 287-307 (NTFL…STIL), and 338-358 (FISD…ISLY). The active-site 4-aspartylphosphate intermediate is the Asp-407. ATP is bound by residues Asp-407, Lys-408, Thr-409, Glu-530, Phe-571, Lys-594, Arg-625, Thr-705, Gly-706, Asp-707, Arg-793, and Lys-799. Asp-407 contacts Mg(2+). Position 409 (Thr-409) interacts with Mg(2+). Asp-820 provides a ligand contact to Mg(2+). Asn-823 and Asp-824 together coordinate ATP. Asp-824 is a binding site for Mg(2+). 6 helical membrane-spanning segments follow: residues 862 to 882 (LLFV…QYFF), 910 to 930 (VYLT…YSLV), 963 to 983 (WTVL…FLVG), 994 to 1014 (MFGN…TVTV), 1033 to 1053 (GSII…WPFL), and 1060 to 1080 (FVFI…LMVV).

This sequence belongs to the cation transport ATPase (P-type) (TC 3.A.3) family. Type IV subfamily. Component of a P4-ATPase flippase complex which consists of a catalytic alpha subunit ATP11B and an accessory beta subunit TMEM30A. Requires Mg(2+) as cofactor. In terms of tissue distribution, expressed in retina, brain, liver, testes and kidney (at protein level).

The protein resides in the recycling endosome membrane. Its subcellular location is the early endosome. It is found in the endoplasmic reticulum. The protein localises to the golgi apparatus. It localises to the trans-Golgi network. It catalyses the reaction ATP + H2O + phospholipidSide 1 = ADP + phosphate + phospholipidSide 2.. It carries out the reaction a 1,2-diacyl-sn-glycero-3-phospho-L-serine(out) + ATP + H2O = a 1,2-diacyl-sn-glycero-3-phospho-L-serine(in) + ADP + phosphate + H(+). The enzyme catalyses a 1,2-diacyl-sn-glycero-3-phosphoethanolamine(out) + ATP + H2O = a 1,2-diacyl-sn-glycero-3-phosphoethanolamine(in) + ADP + phosphate + H(+). Its function is as follows. Catalytic component of a P4-ATPase flippase complex which catalyzes the hydrolysis of ATP coupled to the transport of aminophospholipids, phosphatidylserines (PS) and phosphatidylethanolamines (PE), from the outer to the inner leaflet of intracellular membranes. May contribute to the maintenance of membrane lipid asymmetry in endosome compartment. This Mus musculus (Mouse) protein is Phospholipid-transporting ATPase IF.